The chain runs to 129 residues: Glycine cleavage system H protein (129 aa).

The Lipoyl-binding domain occupies 24 to 106 (LLKIGVSEFA…IGNGWLLIIK (83 aa)). The residue at position 65 (Lys65) is an N6-lipoyllysine.

This sequence belongs to the GcvH family. In terms of assembly, the glycine cleavage system is composed of four proteins: P, T, L and H. (R)-lipoate is required as a cofactor.

The glycine cleavage system catalyzes the degradation of glycine. The H protein shuttles the methylamine group of glycine from the P protein to the T protein. This chain is Glycine cleavage system H protein, found in Prochlorococcus marinus (strain MIT 9515).